The primary structure comprises 306 residues: C-type lectin domain family 10 member A (306 aa).

At 1-37 (MTMAYENFQNLGSEEKNQEAGKAPPQSFLCNILSWTH) the chain is on the cytoplasmic side. Residues 38 to 58 (LLLFSLGLSLLLLVVISVIGS) traverse the membrane as a helical; Signal-anchor for type II membrane protein segment. The Extracellular portion of the chain corresponds to 59–306 (QNSQLRRDLE…VCEMKLAKDS (248 aa)). N-linked (GlcNAc...) asparagine glycosylation is found at N76 and N168. Residues 174-300 (CCPLHWMEHE…QRPYRWVCEM (127 aa)) enclose the C-type lectin domain. Intrachain disulfides connect C175-C186, C203-C298, and C276-C290.

Homooligomer.

It is found in the membrane. In terms of biological role, recognizes terminal galactose and N-acetylgalactosamine units. This is C-type lectin domain family 10 member A (Clec10a) from Rattus norvegicus (Rat).